The following is a 161-amino-acid chain: Cyclic pyranopterin monophosphate synthase (161 aa).

Substrate-binding positions include 75 to 77 and 113 to 114; these read LCH and ME. The active site involves aspartate 128.

The protein belongs to the MoaC family. Homohexamer; trimer of dimers.

It catalyses the reaction (8S)-3',8-cyclo-7,8-dihydroguanosine 5'-triphosphate = cyclic pyranopterin phosphate + diphosphate. The protein operates within cofactor biosynthesis; molybdopterin biosynthesis. In terms of biological role, catalyzes the conversion of (8S)-3',8-cyclo-7,8-dihydroguanosine 5'-triphosphate to cyclic pyranopterin monophosphate (cPMP). This chain is Cyclic pyranopterin monophosphate synthase, found in Shigella sonnei (strain Ss046).